The chain runs to 521 residues: Acetylcholine receptor subunit delta (521 aa).

Positions 1-21 (MAWIWISLLLPILIYFPGCFS) are cleaved as a signal peptide. Residues 22–247 (ESEEERLLNH…ITFYLIIERK (226 aa)) are Extracellular-facing. 2 N-linked (GlcNAc...) asparagine glycosylation sites follow: Asn-53 and Asn-164. Cys-151 and Cys-165 are oxidised to a cystine. Transmembrane regions (helical) follow at residues 248 to 272 (PLFYIINILAPCVLIALMANLVFYL), 280 to 297 (MTLAISVLLAQSVFLLLI), and 314 to 335 (YLMFIMVLVTIVVVSCVIVLNL). Topologically, residues 336 to 475 (HFRTPSTHAI…WYRIARTVDR (140 aa)) are cytoplasmic. Position 394 is a phosphotyrosine; by Tyr-kinases (Tyr-394). Residues 476-494 (LCLFLVTPVMIIGTLWIFL) form a helical membrane-spanning segment.

It belongs to the ligand-gated ion channel (TC 1.A.9) family. Acetylcholine receptor (TC 1.A.9.1) subfamily. In terms of assembly, pentamer of two alpha chains, and one each of the beta, delta, and gamma (in immature muscle) or epsilon (in mature muscle) chains.

It is found in the postsynaptic cell membrane. The protein resides in the cell membrane. It catalyses the reaction K(+)(in) = K(+)(out). The catalysed reaction is Na(+)(in) = Na(+)(out). Its function is as follows. After binding acetylcholine, the AChR responds by an extensive change in conformation that affects all subunits and leads to opening of an ion-conducting channel across the plasma membrane. This Xenopus laevis (African clawed frog) protein is Acetylcholine receptor subunit delta (chrnd).